A 439-amino-acid polypeptide reads, in one-letter code: High-energy light unresponsive protein 1 (439 aa).

Residues 1 to 67 (MPPPSSHSNI…LGLNQSIRPN (67 aa)) are Cytoplasmic-facing. Residues 68–88 (NSLLFRIYSWLVFCLLLFTTL) traverse the membrane as a helical segment. Residues 89-114 (RKFNQVGVRPNGTRENLQEFFANPRS) lie on the Extracellular side of the membrane. A helical transmembrane segment spans residues 115–135 (MITLCNALIMLSGLLASLQLY). Topologically, residues 136–164 (TLGAKRLKPLKILCQFSLNVRTKQAERRQ) are cytoplasmic. The chain crosses the membrane as a helical span at residues 165 to 185 (FMINTFLAVFSGLLALTMAAT). The Extracellular portion of the chain corresponds to 186–211 (YAMSKWGYILYIVGTPNLDTETIFCV). The chain crosses the membrane as a helical span at residues 212–232 (LLDSYALFVSRAAISALAILF). Over 233 to 290 (YQHCSVIRRSIKHLINEMVPAEQDECPLPESSLQKIHDCQISYQRIFNGKAVIEEYYS) the chain is Cytoplasmic. The chain crosses the membrane as a helical span at residues 291–311 (FVLFYSYGVCIPIFCFLMFVG). Topologically, residues 312-324 (MSAQSICWSEVVS) are extracellular. A helical transmembrane segment spans residues 325–345 (IVIWIVNAILVLLLFSLPAFM). The Cytoplasmic portion of the chain corresponds to 346-402 (INEDGDRLVASSFRMYHETFHEERDLTVLSQMTFFTFQIHSTKLTLSACNYFYMDRS). The helical transmembrane segment at 403-423 (ILLSLFSAILTYFLILWEFDI) threads the bilayer. At 424 to 439 (KNNQSLQNIANHTIHT) the chain is on the extracellular side.

Belongs to the insect chemoreceptor superfamily. Gustatory receptor (GR) family. As to expression, expressed in the AVG and PVT neurons of the tail.

Its subcellular location is the cell membrane. In terms of biological role, photoreceptor for short wavelength (UV) light that mediates UV-light-induced avoidance behavior. Directly senses and absorbs both UV-A and UV-B light with very high efficiency. Absorption of UV-B but not UV-A light shows resistance to photobleaching. In contrast to other photoreceptors, does not use a prosthetic chromophore to capture photons and only depends on its protein conformation. Might have a role in response to white light exposure. This Caenorhabditis elegans protein is High-energy light unresponsive protein 1.